Consider the following 366-residue polypeptide: Peptide chain release factor 2 (366 aa).

N5-methylglutamine is present on Q253.

Belongs to the prokaryotic/mitochondrial release factor family. In terms of processing, methylated by PrmC. Methylation increases the termination efficiency of RF2.

Its subcellular location is the cytoplasm. Functionally, peptide chain release factor 2 directs the termination of translation in response to the peptide chain termination codons UGA and UAA. This is Peptide chain release factor 2 (prfB) from Buchnera aphidicola subsp. Baizongia pistaciae (strain Bp).